The chain runs to 652 residues: DNA ligase (652 aa).

NAD(+) contacts are provided by residues 29 to 33 (DAEYD), 78 to 79 (SL), and Glu-107. Residue Lys-109 is the N6-AMP-lysine intermediate of the active site. Arg-130, Glu-164, Lys-278, and Lys-302 together coordinate NAD(+). Residues Cys-395, Cys-398, Cys-413, and Cys-418 each coordinate Zn(2+). Positions 577-652 (ADDAILSGKT…VKDEAWLLDL (76 aa)) constitute a BRCT domain.

The protein belongs to the NAD-dependent DNA ligase family. LigA subfamily. The cofactor is Mg(2+). Mn(2+) serves as cofactor.

It carries out the reaction NAD(+) + (deoxyribonucleotide)n-3'-hydroxyl + 5'-phospho-(deoxyribonucleotide)m = (deoxyribonucleotide)n+m + AMP + beta-nicotinamide D-nucleotide.. DNA ligase that catalyzes the formation of phosphodiester linkages between 5'-phosphoryl and 3'-hydroxyl groups in double-stranded DNA using NAD as a coenzyme and as the energy source for the reaction. It is essential for DNA replication and repair of damaged DNA. In Streptococcus thermophilus (strain CNRZ 1066), this protein is DNA ligase.